The following is a 143-amino-acid chain: Transcriptional regulator MraZ (143 aa).

2 SpoVT-AbrB domains span residues 5-47 and 76-119; these read EYQH…PQDE and ATEC…SKER.

This sequence belongs to the MraZ family. As to quaternary structure, forms oligomers.

It localises to the cytoplasm. The protein localises to the nucleoid. This chain is Transcriptional regulator MraZ, found in Brevibacillus brevis (strain 47 / JCM 6285 / NBRC 100599).